The following is a 501-amino-acid chain: Pentatricopeptide repeat-containing protein At2g36730 (501 aa).

PPR repeat units follow at residues 77–111 (TPST…GIKP), 112–146 (NKLT…GFDF), 147–177 (DVYV…MTER), 178–212 (NVVS…RFCP), 213–243 (DETT…VREL), 246–276 (NCRL…MVDK), 277–312 (NVWT…SVRP), 313–343 (NYVT…MEKI), and 349–379 (MMIH…MPFE). The interval 384–462 (VWRTLLSACS…IAGESCLELG (79 aa)) is type E motif. Residues 463 to 493 (GSFHRFFSGYDPRSEYVSIYELLDLFKFQLT) are type E(+) motif.

It belongs to the PPR family. PCMP-E subfamily.

The sequence is that of Pentatricopeptide repeat-containing protein At2g36730 (PCMP-E44) from Arabidopsis thaliana (Mouse-ear cress).